Here is a 252-residue protein sequence, read N- to C-terminus: Ribosomal RNA small subunit methyltransferase NEP1 (252 aa).

S-adenosyl-L-methionine-binding positions include Met-176, Gly-209, Gly-214, and 227-232 (ISNYPL).

It belongs to the class IV-like SAM-binding methyltransferase superfamily. RNA methyltransferase NEP1 family. Homodimer. Part of the small subunit (SSU) processome, composed of more than 70 proteins and the RNA chaperone small nucleolar RNA (snoRNA) U3.

The protein localises to the nucleus. It localises to the nucleolus. It catalyses the reaction a pseudouridine in rRNA + S-adenosyl-L-methionine = an N(1)-methylpseudouridine in rRNA + S-adenosyl-L-homocysteine + H(+). S-adenosyl-L-methionine-dependent pseudouridine N(1)-methyltransferase that methylates a pseudouridine in 18S rRNA. Involved the biosynthesis of the hypermodified N1-methyl-N3-(3-amino-3-carboxypropyl) pseudouridine (m1acp3-Psi) conserved in eukaryotic 18S rRNA. Also has an essential role in 40S ribosomal subunit biogenesis independent on its methyltransferase activity, facilitating the incorporation of ribosomal protein S19 during the formation of pre-ribosomes. In terms of biological role, S-adenosyl-L-methionine-dependent pseudouridine N(1)-methyltransferase that methylates pseudouridine at position in 18S rRNA. Involved the biosynthesis of the hypermodified N1-methyl-N3-(3-amino-3-carboxypropyl) pseudouridine (m1acp3-Psi) conserved in eukaryotic 18S rRNA. Is not able to methylate uridine at this position. Also has an essential role in 40S ribosomal subunit biogenesis independent on its methyltransferase activity, facilitating the incorporation of ribosomal protein S19 during the formation of pre-ribosomes. Part of the small subunit (SSU) processome, first precursor of the small eukaryotic ribosomal subunit. During the assembly of the SSU processome in the nucleolus, many ribosome biogenesis factors, an RNA chaperone and ribosomal proteins associate with the nascent pre-rRNA and work in concert to generate RNA folding, modifications, rearrangements and cleavage as well as targeted degradation of pre-ribosomal RNA by the RNA exosome. The sequence is that of Ribosomal RNA small subunit methyltransferase NEP1 from Drosophila melanogaster (Fruit fly).